A 275-amino-acid polypeptide reads, in one-letter code: Large ribosomal subunit protein uL2 (275 aa).

The interval 224–275 is disordered; that stretch reads AMNPVDHPHGGGEGKAPIGHPGPLTPWGKPALGYKTRKKGKASDKFIVKRRK. Residues 264–275 are compositionally biased toward basic and acidic residues; that stretch reads KASDKFIVKRRK.

Belongs to the universal ribosomal protein uL2 family. As to quaternary structure, part of the 50S ribosomal subunit. Forms a bridge to the 30S subunit in the 70S ribosome.

Its function is as follows. One of the primary rRNA binding proteins. Required for association of the 30S and 50S subunits to form the 70S ribosome, for tRNA binding and peptide bond formation. It has been suggested to have peptidyltransferase activity; this is somewhat controversial. Makes several contacts with the 16S rRNA in the 70S ribosome. The protein is Large ribosomal subunit protein uL2 of Caldanaerobacter subterraneus subsp. tengcongensis (strain DSM 15242 / JCM 11007 / NBRC 100824 / MB4) (Thermoanaerobacter tengcongensis).